Consider the following 402-residue polypeptide: Protein lag-2 (402 aa).

The N-terminal stretch at 1-15 (MIAYFLLLLTCLPVL) is a signal peptide. Topologically, residues 16–279 (QARVEVHQEF…TTTTPTTVEI (264 aa)) are extracellular. 2 N-linked (GlcNAc...) asparagine glycosylation sites follow: asparagine 72 and asparagine 105. Residues 122 to 166 (VTCARNYFGNRCENFCDAHLAKAARKRCDAMGRLRCDIGWMGPHC) form the DSL domain. Disulfide bonds link cysteine 124/cysteine 133, cysteine 137/cysteine 149, cysteine 157/cysteine 166, cysteine 175/cysteine 183, cysteine 177/cysteine 204, cysteine 206/cysteine 215, cysteine 233/cysteine 245, cysteine 239/cysteine 254, and cysteine 256/cysteine 265. EGF-like domains are found at residues 171 to 216 (DPRK…TRCE) and 229 to 266 (RPDA…EFCE). Asparagine 194 carries N-linked (GlcNAc...) asparagine glycosylation. The chain crosses the membrane as a helical span at residues 280 to 306 (TVSTSGYSSAVYITVALFVIFSIIIGC). The Cytoplasmic segment spans residues 307 to 402 (FKYKFKPMRQ…PPSIPACHYV (96 aa)).

In terms of assembly, may interact with lin-12 / Notch receptor. As to expression, expressed in the gonad distal tip cell (DTC) of hermaphrodites.

It is found in the cell membrane. In terms of biological role, probable ligand for lin-12/Notch and glp-1/Notch receptors and involved in the mediation of Notch signaling. Involved in the lin-12/Notch pathway signaling of cell fate in vulval precursor cells (VPCs) and in the postembryonic mesodermal lineage (M lineage), acting redundantly with dsl-1 and apx-1. Functions in uterine cells to promote basement membrane mobility during tissue remodeling. Required for oocyte growth control, acting redundantly with apx-1, perhaps signaling via the glp-1/Notch pathway. Plays a role in Notch-dependent induction of left-right asymmetry in interneurons and motoneurons. Involved in maintaining the developmentally arrested larval state known as dauer, probably signaling in the glp-1/Notch pathway. Required for normal sleep bout quantity and arousal thresholds during the transition from the last larval stage to adulthood in well-fed animals. This Caenorhabditis elegans protein is Protein lag-2.